The sequence spans 26 residues: Acetyl-CoA acetyltransferase (26 aa).

The active-site Acyl-thioester intermediate is the Cys-21.

Belongs to the thiolase-like superfamily. Thiolase family. As to quaternary structure, homotetramer. Succinylation, adjacent to a coenzyme A binding site. Desuccinylated by SIRT5.

The protein localises to the mitochondrion. It carries out the reaction 2 acetyl-CoA = acetoacetyl-CoA + CoA. The polypeptide is Acetyl-CoA acetyltransferase (Sus scrofa (Pig)).